The following is a 334-amino-acid chain: MAGFYDIISPSNQHRPPVWLLRQVGRYMPQYQELKTNRPLKELFLDTESIIEATLLGPSLLGVDAAIVFTDILSILEGFAIEYRFAPGPEIIYSPHQPFVFTEDPFSTFSFLIEAIQKLTKRLTVPLIAFAASPFTLASYLIEGGASKDCSKTIAFLYQYPDKFEALLNEIIKGTAIYLQLQVQAGASAVQLFESSSLRLPPSLFSKYVVSPNAKLIRLIKQRENPPVSLFCRCFYQEFLSLYATGADTLHPDYHVELSEIYRQLGDPGSIQGNFDPALLLLPQDLLIAHLETYLAPLKQQSHYIFNLGHGILPQTPLENVQAVVKCLTSISTS.

Residues 22–26 (RQVGR), Asp-71, Tyr-140, Ser-195, and His-310 each bind substrate.

The protein belongs to the uroporphyrinogen decarboxylase family. In terms of assembly, homodimer.

Its subcellular location is the cytoplasm. It carries out the reaction uroporphyrinogen III + 4 H(+) = coproporphyrinogen III + 4 CO2. The protein operates within porphyrin-containing compound metabolism; protoporphyrin-IX biosynthesis; coproporphyrinogen-III from 5-aminolevulinate: step 4/4. Catalyzes the decarboxylation of four acetate groups of uroporphyrinogen-III to yield coproporphyrinogen-III. In Chlamydia muridarum (strain MoPn / Nigg), this protein is Uroporphyrinogen decarboxylase.